We begin with the raw amino-acid sequence, 384 residues long: S-adenosylmethionine synthase (384 aa).

Position 15 (His-15) interacts with ATP. Asp-17 lines the Mg(2+) pocket. Residue Glu-43 coordinates K(+). Residues Glu-56 and Gln-99 each coordinate L-methionine. Positions 99–109 (QSPDINQGVDR) are flexible loop. Residues 164 to 166 (DAK), 230 to 231 (RF), Asp-239, 245 to 246 (RK), Ala-262, and Lys-266 contribute to the ATP site. Position 239 (Asp-239) interacts with L-methionine. Residue Lys-270 participates in L-methionine binding.

This sequence belongs to the AdoMet synthase family. As to quaternary structure, homotetramer; dimer of dimers. Mg(2+) is required as a cofactor. The cofactor is K(+).

Its subcellular location is the cytoplasm. It carries out the reaction L-methionine + ATP + H2O = S-adenosyl-L-methionine + phosphate + diphosphate. The protein operates within amino-acid biosynthesis; S-adenosyl-L-methionine biosynthesis; S-adenosyl-L-methionine from L-methionine: step 1/1. In terms of biological role, catalyzes the formation of S-adenosylmethionine (AdoMet) from methionine and ATP. The overall synthetic reaction is composed of two sequential steps, AdoMet formation and the subsequent tripolyphosphate hydrolysis which occurs prior to release of AdoMet from the enzyme. This is S-adenosylmethionine synthase from Citrobacter koseri (strain ATCC BAA-895 / CDC 4225-83 / SGSC4696).